The following is a 314-amino-acid chain: Methionyl-tRNA formyltransferase (314 aa).

111–114 (SLLP) serves as a coordination point for (6S)-5,6,7,8-tetrahydrofolate.

This sequence belongs to the Fmt family.

It carries out the reaction L-methionyl-tRNA(fMet) + (6R)-10-formyltetrahydrofolate = N-formyl-L-methionyl-tRNA(fMet) + (6S)-5,6,7,8-tetrahydrofolate + H(+). Functionally, attaches a formyl group to the free amino group of methionyl-tRNA(fMet). The formyl group appears to play a dual role in the initiator identity of N-formylmethionyl-tRNA by promoting its recognition by IF2 and preventing the misappropriation of this tRNA by the elongation apparatus. The protein is Methionyl-tRNA formyltransferase of Nitrobacter winogradskyi (strain ATCC 25391 / DSM 10237 / CIP 104748 / NCIMB 11846 / Nb-255).